We begin with the raw amino-acid sequence, 261 residues long: Cytochrome c oxidase subunit 3 (261 aa).

6 consecutive transmembrane segments (helical) span residues 31 to 51 (LVLW…LLLI), 82 to 102 (PMIL…WAFF), 126 to 146 (PFLV…TITW), 159 to 179 (AIQA…LQAW), 197 to 217 (FFVA…FLLV), and 239 to 259 (AWYW…IYWW).

Belongs to the cytochrome c oxidase subunit 3 family. As to quaternary structure, component of the cytochrome c oxidase (complex IV, CIV), a multisubunit enzyme composed of a catalytic core of 3 subunits and several supernumerary subunits. The complex exists as a monomer or a dimer and forms supercomplexes (SCs) in the inner mitochondrial membrane with ubiquinol-cytochrome c oxidoreductase (cytochrome b-c1 complex, complex III, CIII).

The protein resides in the mitochondrion inner membrane. The enzyme catalyses 4 Fe(II)-[cytochrome c] + O2 + 8 H(+)(in) = 4 Fe(III)-[cytochrome c] + 2 H2O + 4 H(+)(out). Its function is as follows. Component of the cytochrome c oxidase, the last enzyme in the mitochondrial electron transport chain which drives oxidative phosphorylation. The respiratory chain contains 3 multisubunit complexes succinate dehydrogenase (complex II, CII), ubiquinol-cytochrome c oxidoreductase (cytochrome b-c1 complex, complex III, CIII) and cytochrome c oxidase (complex IV, CIV), that cooperate to transfer electrons derived from NADH and succinate to molecular oxygen, creating an electrochemical gradient over the inner membrane that drives transmembrane transport and the ATP synthase. Cytochrome c oxidase is the component of the respiratory chain that catalyzes the reduction of oxygen to water. Electrons originating from reduced cytochrome c in the intermembrane space (IMS) are transferred via the dinuclear copper A center (CU(A)) of subunit 2 and heme A of subunit 1 to the active site in subunit 1, a binuclear center (BNC) formed by heme A3 and copper B (CU(B)). The BNC reduces molecular oxygen to 2 water molecules using 4 electrons from cytochrome c in the IMS and 4 protons from the mitochondrial matrix. The polypeptide is Cytochrome c oxidase subunit 3 (COIII) (Paracentrotus lividus (Common sea urchin)).